Here is a 145-residue protein sequence, read N- to C-terminus: MDLLLINGPNLNLVGKREPSIYGSQTLEDIQEELLTLANELGANLKFFQSNSEGEMIDCIQNSVGSIDGILINAGAYTHTSIALRDALLGVAIPYVEVHLSNIYSREEFRHKSFLSDKALGLVCGFGANSYQLALEGIVSYLKRV.

Catalysis depends on Y22, which acts as the Proton acceptor. N73, H79, and D86 together coordinate substrate. The active-site Proton donor is H99. Substrate-binding positions include 100-101 (LS) and R110.

It belongs to the type-II 3-dehydroquinase family. In terms of assembly, homododecamer.

It carries out the reaction 3-dehydroquinate = 3-dehydroshikimate + H2O. The protein operates within metabolic intermediate biosynthesis; chorismate biosynthesis; chorismate from D-erythrose 4-phosphate and phosphoenolpyruvate: step 3/7. Its function is as follows. Catalyzes a trans-dehydration via an enolate intermediate. This Prochlorococcus marinus (strain NATL1A) protein is 3-dehydroquinate dehydratase.